Consider the following 161-residue polypeptide: Nucleotide-binding protein Shew185_3601 (161 aa).

Belongs to the YajQ family.

Its function is as follows. Nucleotide-binding protein. In Shewanella baltica (strain OS185), this protein is Nucleotide-binding protein Shew185_3601.